Reading from the N-terminus, the 771-residue chain is Heat shock transcription factor (771 aa).

Positions 1-70 (MTTNLYAIAG…GIGISKPGLS (70 aa)) are disordered. Composition is skewed to low complexity over residues 11-23 (PSKPTTPTSTPSP) and 31-42 (LKSLTSLPTNPL). A compositionally biased stretch (polar residues) spans 43–62 (NPQGTSTSNALTNQSSSTGI). A DNA-binding region spans residues 78–168 (MKVPAFLNKL…PIELWEFANP (91 aa)). Residues 183–266 (RKNNRLSNSG…PPSHTSAGPL (84 aa)) form a disordered region. Composition is skewed to low complexity over residues 189–199 (SNSGVGSSSSL) and 212–233 (SASAAAASGSGSGQIQQAISQG). Residues 238–262 (NHSTSGKYLITDGTTPGSAPPSHTS) are compositionally biased toward polar residues. The segment at 280–333 (GIAAIRQTQASIATDLRKLQASNEALWRQAYETQEKQRKHEETIDLIVSFLERL) is involved in trimerization. 2 stretches are compositionally biased toward basic and acidic residues: residues 350–372 (RGVGVRRDRDGREGRDSRDARFA) and 399–415 (TGEHGEIESPSSDDRLV). Disordered regions lie at residues 350-513 (RGVG…SSNA), 590-634 (QALT…GSGT), and 708-771 (SGVG…SGLK). Residues 418–448 (GSNSEYSIPSVKRTSSSSHPLSLGQLGSSRF) show a composition bias toward polar residues. 2 stretches are compositionally biased toward low complexity: residues 497–511 (LSPLSDTDPLLPSSS) and 599–620 (HNPSLLNPNPNGNASTSASASA).

Belongs to the HSF family. As to quaternary structure, homotrimer. Homotrimerization increases the affinity of HSF1 to DNA. Interacts with transcriptional coregulator SSA1 on chromatin. In terms of processing, phosphorylated at high temperature.

Its subcellular location is the nucleus. Functionally, DNA-binding transcription factor that specifically binds heat shock promoter elements (HSE) and activates transcription. Promotes thermotolerance by transiently regulating a subset of genes. Induces expression of STI, SSA1, SSA2, HSP78 and KAR2 during the heat response. The polypeptide is Heat shock transcription factor (Cryptococcus neoformans var. grubii serotype A (strain H99 / ATCC 208821 / CBS 10515 / FGSC 9487) (Filobasidiella neoformans var. grubii)).